Reading from the N-terminus, the 862-residue chain is Short transient receptor potential channel 7 (862 aa).

The tract at residues 1–21 is disordered; that stretch reads MLRNSTFKNMQRRHTTLREKG. At 1–351 the chain is on the cytoplasmic side; sequence MLRNSTFKNM…GLRQQSIAVK (351 aa). Basic residues predominate over residues 10–21; sequence MQRRHTTLREKG. Phosphothreonine; by PKG/PRKG1 is present on Thr-15. ANK repeat units follow at residues 42–71, 77–106, 108–134, and 163–192; these read PEEERFLDSAEYGNIPVVRKMLEESKTLNF, MGQNALQLAVGNEHLEVTELLLKKENLARV, DALLLAISKGYVRIVEAILNHPAFAQG, and HDITPIILAAHCQEYEIVHILLLKGARIER. A helical membrane pass occupies residues 352–372; that stretch reads FLAVFGVSIGLPFLAIAYWIA. Residues 373 to 383 are Extracellular-facing; sequence PCSKLGRTLRS. The chain crosses the membrane as a helical span at residues 384–404; that stretch reads PFMKFVAHAVSFTIFLGLLVV. Over 405-465 the chain is Cytoplasmic; it reads NASDRFEGVK…KEIWEEGPRE (61 aa). The helical transmembrane segment at 466 to 486 threads the bilayer; that stretch reads YVLHLWNLLDFGMLSIFVASF. Residues 487 to 537 are Extracellular-facing; that stretch reads TARFMAFLKATEAQLYVDQHVQDDTLHNVSLPPEVAYFTYARDKWWPSDPQ. Residue Asn-514 is glycosylated (N-linked (GlcNAc...) asparagine). A helical membrane pass occupies residues 538–558; it reads IISEGLYAIAVVLSFSRIAYI. Residues 559-581 lie on the Cytoplasmic side of the membrane; the sequence is LPANESFGPLQISLGRTVKDIFK. The helical transmembrane segment at 582–602 threads the bilayer; sequence FMVIFIMVFVAFMIGMFNLYS. Residues 603 to 651 lie on the Extracellular side of the membrane; it reads YYRGAKYNPAFTTVEESFKTLFWSIFGLSEVISVVLKYDHKFIENIGYV. Residues 652-672 form a helical membrane-spanning segment; that stretch reads LYGVYNVTMVVVLLNMLIAMI. Residues 673 to 862 are Cytoplasmic-facing; sequence NNSYQEIEED…HLRVNKGKDI (190 aa).

It belongs to the transient receptor (TC 1.A.4) family. STrpC subfamily. TRPC7 sub-subfamily. Interacts with MX1 and RNF24. Interacts (via ANK-repeat domains) with PRKG1. Post-translationally, phosphorylation by PRKG1 at Thr-15 negatively regulates TRPC7 activity.

The protein resides in the cell membrane. Its subcellular location is the nucleus envelope. It catalyses the reaction Ca(2+)(in) = Ca(2+)(out). Its function is as follows. Forms a receptor-activated non-selective calcium permeant cation channel. Probably is operated by a phosphatidylinositol second messenger system activated by receptor tyrosine kinases or G-protein coupled receptors. Activated by diacylglycerol (DAG). May also be activated by intracellular calcium store depletion. The chain is Short transient receptor potential channel 7 (TRPC7) from Homo sapiens (Human).